The sequence spans 41 residues: Trypsin inhibitor (41 aa).

3 disulfide bridges follow: Cys15/Cys26, Cys17/Cys24, and Cys29/Cys37.

Has two active sites that simultaneously bind and inhibit trypsin. The sequence is that of Trypsin inhibitor from Trichosanthes kirilowii (Chinese snake gourd).